The following is a 242-amino-acid chain: Small ribosomal subunit protein uS2 (242 aa).

The protein belongs to the universal ribosomal protein uS2 family.

The protein is Small ribosomal subunit protein uS2 of Neisseria meningitidis serogroup C (strain 053442).